Here is a 465-residue protein sequence, read N- to C-terminus: GTPase Der (465 aa).

EngA-type G domains are found at residues 3-167 and 179-352; these read PLVA…PEEG and IRIA…ESAN. GTP contacts are provided by residues 9–16, 57–61, 119–122, 185–192, 232–236, and 297–300; these read GRPNVGKS, DTGGI, NKID, DTAGL, and NKWD. The 85-residue stretch at 353 to 437 folds into the KH-like domain; sequence KTFTTSEVNK…PVSFIFREGT (85 aa).

This sequence belongs to the TRAFAC class TrmE-Era-EngA-EngB-Septin-like GTPase superfamily. EngA (Der) GTPase family. In terms of assembly, associates with the 50S ribosomal subunit.

Its function is as follows. GTPase that plays an essential role in the late steps of ribosome biogenesis. The chain is GTPase Der from Stenotrophomonas maltophilia (strain K279a).